The sequence spans 371 residues: Dual-specificity RNA methyltransferase RlmN (371 aa).

Glutamate 114 functions as the Proton acceptor in the catalytic mechanism. In terms of domain architecture, Radical SAM core spans 120-352; the sequence is EEDHFTLCVS…VMTRQSKGAD (233 aa). Cysteine 127 and cysteine 357 are oxidised to a cystine. The [4Fe-4S] cluster site is built by cysteine 134, cysteine 138, and cysteine 141. S-adenosyl-L-methionine is bound by residues 183–184, serine 216, 238–240, and asparagine 314; these read GE and SLN. The S-methylcysteine intermediate role is filled by cysteine 357.

This sequence belongs to the radical SAM superfamily. RlmN family. The cofactor is [4Fe-4S] cluster.

It is found in the cytoplasm. The enzyme catalyses adenosine(2503) in 23S rRNA + 2 reduced [2Fe-2S]-[ferredoxin] + 2 S-adenosyl-L-methionine = 2-methyladenosine(2503) in 23S rRNA + 5'-deoxyadenosine + L-methionine + 2 oxidized [2Fe-2S]-[ferredoxin] + S-adenosyl-L-homocysteine. It catalyses the reaction adenosine(37) in tRNA + 2 reduced [2Fe-2S]-[ferredoxin] + 2 S-adenosyl-L-methionine = 2-methyladenosine(37) in tRNA + 5'-deoxyadenosine + L-methionine + 2 oxidized [2Fe-2S]-[ferredoxin] + S-adenosyl-L-homocysteine. Specifically methylates position 2 of adenine 2503 in 23S rRNA and position 2 of adenine 37 in tRNAs. m2A2503 modification seems to play a crucial role in the proofreading step occurring at the peptidyl transferase center and thus would serve to optimize ribosomal fidelity. This is Dual-specificity RNA methyltransferase RlmN from Desulfosudis oleivorans (strain DSM 6200 / JCM 39069 / Hxd3) (Desulfococcus oleovorans).